Here is a 200-residue protein sequence, read N- to C-terminus: Golgi to ER traffic protein 1 (200 aa).

Topologically, residues 1–6 are lumenal; it reads MEPYTL. Residues 7–26 form a helical membrane-spanning segment; it reads LLFIFVIQIVKQIISAVGKQ. Residues 27 to 113 are Cytoplasmic-facing; the sequence is SIESISWVLY…KVNTFTGYLI (87 aa). Residues 75–107 adopt a coiled-coil conformation; sequence AKWTKLNRQHDKLVAEIEQLQKEVDLDKVKVNT. The helical transmembrane segment at 114-134 threads the bilayer; sequence AILTSIPIWFFRVWYRSVVLF. At 135–158 the chain is on the lumenal side; it reads YFPPGILPRALEWSIALPFTVTGG. The helical transmembrane segment at 159 to 175 threads the bilayer; that stretch reads VSLTVWMMAAGAVASSL. Over 176–200 the chain is Cytoplasmic; it reads TFLFMFPFEKAVPKPVLAKKSPQQL.

Belongs to the WRB/GET1 family. As to quaternary structure, component of the Golgi to ER traffic (GET) complex, which is composed of GET1, GET2 and GET3. Within the complex, GET1 and GET2 form a heterotetramer which is stabilized by phosphatidylinositol binding and which binds to the GET3 homodimer.

Its subcellular location is the endoplasmic reticulum membrane. It is found in the golgi apparatus membrane. Functionally, required for the post-translational delivery of tail-anchored (TA) proteins to the endoplasmic reticulum. Together with GET2, acts as a membrane receptor for soluble GET3, which recognizes and selectively binds the transmembrane domain of TA proteins in the cytosol. The GET complex cooperates with the HDEL receptor ERD2 to mediate the ATP-dependent retrieval of resident ER proteins that contain a C-terminal H-D-E-L retention signal from the Golgi to the ER. The protein is Golgi to ER traffic protein 1 of Meyerozyma guilliermondii (strain ATCC 6260 / CBS 566 / DSM 6381 / JCM 1539 / NBRC 10279 / NRRL Y-324) (Yeast).